Reading from the N-terminus, the 1271-residue chain is Probable WRKY transcription factor protein 1 (1271 aa).

Positions 1–12 are enriched in polar residues; it reads MGAQYSTELNKY. Disordered regions lie at residues 1–138, 204–312, and 370–515; these read MGAQ…NSDR, NNNN…QQNG, and NNNN…RTNS. Residues 9 to 71 adopt a coiled-coil conformation; the sequence is LNKYNNNNNN…NNNNNNNNNN (63 aa). 4 stretches are compositionally biased toward low complexity: residues 13–103, 116–135, 204–216, and 223–259; these read NNNN…NNNN, INNT…NNNN, NNNN…NENN, and SSTT…NNNN. The span at 260–274 shows a compositional bias: acidic residues; sequence NEDDEDDYGDDDTIE. Positions 297-312 are enriched in polar residues; that stretch reads SNLNDTNGGNSPQQNG. A coiled-coil region spans residues 320–372; it reads KKLLALQQKQLEQEQEQKQQQKQQQQQQQQQQQQQQQQQQQQQKDAIENINNN. Residues 370–388 show a composition bias toward low complexity; that stretch reads NNNNNNKLQPIVKNSVNKT. A compositionally biased stretch (acidic residues) spans 413 to 442; that stretch reads NEDEYDASDEYIDDDDDDDEKYDDDDDEYF. Over residues 443-458 the composition is skewed to low complexity; sequence EGNNNNNYKKNNISNK. The span at 475–487 shows a compositional bias: basic and acidic residues; sequence EIFKQKKLNHDKN. The segment covering 488–515 has biased composition (polar residues); the sequence is QSNPKQQLTSHSEFDNSLLNKNQSRTNS. A coiled-coil region spans residues 520–574; it reads LQIKEENYHQIQQEHGEKQQQQQQQQQQPQQQQQQQQQQQQQQQQEMQVDKEQTE. Positions 578 to 587 are enriched in basic and acidic residues; the sequence is NTNKKEEQKP. Disordered regions lie at residues 578 to 650 and 667 to 811; these read NTNK…EGFL and SKKS…NISN. Low complexity predominate over residues 610–642; the sequence is NNENNNNNNNNNNNNNNNNNNNNNNNNNNYRNN. Polar residues predominate over residues 672–702; the sequence is NVVPTSPKSNLSDQQPPFSPVQISPQKQSPA. Low complexity-rich tracts occupy residues 703–715, 725–766, and 774–811; these read TTTT…TPTP, NNNI…NNIN, and NSTQ…NISN. The stretch at 766-786 forms a coiled coil; the sequence is NNEEDEENNSTQNNNNNNNNN. A DNA-binding region (WRKY 1) is located at residues 808-872; the sequence is NISNIVSDGY…YKGEHCHGFP (65 aa). The Zn(2+) site is built by Cys-839, Cys-844, His-867, and His-869. The segment at 890–1095 is disordered; it reads FEGLDGNNNN…RFNGTSESKG (206 aa). Positions 895 to 918 are enriched in low complexity; sequence GNNNNNNNNNNNNNNYSSNSNSNG. Over residues 919-937 the composition is skewed to gly residues; sequence NGNGNGNGNGNGNGNGNGN. Over residues 938–956 the composition is skewed to low complexity; that stretch reads SNGNQDQNGNSFNDQNGDS. The span at 957–966 shows a compositional bias: polar residues; the sequence is PTQHGQISPM. A compositionally biased stretch (low complexity) spans 967–995; that stretch reads NSPKNTIPTTTTTTTSISTYVNTNSTNKK. Positions 998–1010 are enriched in basic and acidic residues; the sequence is SKQEKKISVKNET. Positions 1011–1021 are enriched in acidic residues; that stretch reads TDDDEFQEDID. Residues 1013–1040 adopt a coiled-coil conformation; the sequence is DDEFQEDIDQLSNNNNNNNNNNNNNNNN. Residues 1025–1085 are compositionally biased toward low complexity; that stretch reads NNNNNNNNNN…NNNNNNNNNN (61 aa). Residues 1105 to 1167 constitute a DNA-binding region (WRKY 2); it reads SSIDHLDDGF…YRGKHNHDPP (63 aa). The Zn(2+) site is built by Cys-1136, Cys-1141, His-1162, and His-1164. The disordered stretch occupies residues 1180 to 1210; sequence NGLYNNNNNNNNNNNNNNNNNNNNNNINNIN. Over residues 1184–1210 the composition is skewed to low complexity; that stretch reads NNNNNNNNNNNNNNNNNNNNNNINNIN.

This sequence belongs to the WRKY group I family.

Its subcellular location is the nucleus. Probable transcription factor. Interacts specifically with the W box (5'-(T)TGAC[CT]-3'), a frequently occurring elicitor-responsive cis-acting element. The polypeptide is Probable WRKY transcription factor protein 1 (wrky1) (Dictyostelium discoideum (Social amoeba)).